Reading from the N-terminus, the 308-residue chain is Uricase-2 (308 aa).

Catalysis depends on charge relay system residues Lys17 and Thr63. Urate-binding residues include Thr63, Asp64, Phe165, Arg182, Val237, Gln238, and Asn264. Catalysis depends on His266, which acts as the Charge relay system. Residues 306–308 (SKL) carry the Microbody targeting signal motif.

It belongs to the uricase family. In terms of assembly, homotetramer. In terms of tissue distribution, expressed predominantly in the uninfected cells of the central tissue of the root nodule. Also expressed in the nodule parenchyma cells and vascular tissue, in the roots, stems and leaves of uninfected adult plants, and in the cotyledons, roots and hypocotyls of developing seedlings. Localized to the metaxylem parenchyma cells and phloem fibers of developing roots.

It is found in the peroxisome. The enzyme catalyses urate + O2 + H2O = 5-hydroxyisourate + H2O2. It participates in purine metabolism; urate degradation; (S)-allantoin from urate: step 1/3. In terms of biological role, catalyzes the oxidation of uric acid to 5-hydroxyisourate, which is further processed to form (S)-allantoin. The sequence is that of Uricase-2 (URIII) from Phaseolus vulgaris (Kidney bean).